A 172-amino-acid polypeptide reads, in one-letter code: Shikimate kinase (172 aa).

11–16 provides a ligand contact to ATP; sequence GTGKTA. Position 15 (T15) interacts with Mg(2+). 3 residues coordinate substrate: D33, R57, and G79. R117 contributes to the ATP binding site. R136 lines the substrate pocket.

Belongs to the shikimate kinase family. Monomer. Requires Mg(2+) as cofactor.

It is found in the cytoplasm. The enzyme catalyses shikimate + ATP = 3-phosphoshikimate + ADP + H(+). It participates in metabolic intermediate biosynthesis; chorismate biosynthesis; chorismate from D-erythrose 4-phosphate and phosphoenolpyruvate: step 5/7. Catalyzes the specific phosphorylation of the 3-hydroxyl group of shikimic acid using ATP as a cosubstrate. This chain is Shikimate kinase, found in Pelotomaculum thermopropionicum (strain DSM 13744 / JCM 10971 / SI).